A 487-amino-acid polypeptide reads, in one-letter code: Inosine-5'-monophosphate dehydrogenase (487 aa).

2 CBS domains span residues 93–152 (VVTE…VTAV) and 153–214 (MTPK…CKDE). NAD(+) contacts are provided by residues D248, 248-250 (DSS), and 298-300 (GIG). Positions 300 and 302 each coordinate K(+). Residue S303 participates in IMP binding. K(+) is bound at residue C305. C305 functions as the Thioimidate intermediate in the catalytic mechanism. IMP contacts are provided by residues 338 to 340 (DGG), 361 to 362 (GS), and 385 to 389 (YRGMG). The active-site Proton acceptor is R401. E415 provides a ligand contact to IMP. E469, S470, and H471 together coordinate K(+).

This sequence belongs to the IMPDH/GMPR family. As to quaternary structure, homotetramer. K(+) serves as cofactor.

It catalyses the reaction IMP + NAD(+) + H2O = XMP + NADH + H(+). It functions in the pathway purine metabolism; XMP biosynthesis via de novo pathway; XMP from IMP: step 1/1. With respect to regulation, mycophenolic acid (MPA) is a non-competitive inhibitor that prevents formation of the closed enzyme conformation by binding to the same site as the amobile flap. In contrast, mizoribine monophosphate (MZP) is a competitive inhibitor that induces the closed conformation. MPA is a potent inhibitor of mammalian IMPDHs but a poor inhibitor of the bacterial enzymes. MZP is a more potent inhibitor of bacterial IMPDH. In terms of biological role, catalyzes the conversion of inosine 5'-phosphate (IMP) to xanthosine 5'-phosphate (XMP), the first committed and rate-limiting step in the de novo synthesis of guanine nucleotides, and therefore plays an important role in the regulation of cell growth. The sequence is that of Inosine-5'-monophosphate dehydrogenase from Yersinia pestis.